Here is a 146-residue protein sequence, read N- to C-terminus: Large ribosomal subunit protein uL15 (146 aa).

The segment covering 1–10 (MKLHELKPAE) has biased composition (basic and acidic residues). Positions 1-51 (MKLHELKPAEGSRQVRNRVGRGTSSGNGKTAGRGQKGQKARSGGGVRLGFE) are disordered. Gly residues-rich tracts occupy residues 23-35 (TSSGNGKTAGRGQ) and 42-51 (SGGGVRLGFE).

The protein belongs to the universal ribosomal protein uL15 family. As to quaternary structure, part of the 50S ribosomal subunit.

Functionally, binds to the 23S rRNA. The sequence is that of Large ribosomal subunit protein uL15 from Enterococcus faecalis (strain ATCC 700802 / V583).